Reading from the N-terminus, the 467-residue chain is ATP synthase subunit beta (467 aa).

An ATP-binding site is contributed by 152–159 (GGAGVGKT).

It belongs to the ATPase alpha/beta chains family. F-type ATPases have 2 components, CF(1) - the catalytic core - and CF(0) - the membrane proton channel. CF(1) has five subunits: alpha(3), beta(3), gamma(1), delta(1), epsilon(1). CF(0) has three main subunits: a(1), b(2) and c(9-12). The alpha and beta chains form an alternating ring which encloses part of the gamma chain. CF(1) is attached to CF(0) by a central stalk formed by the gamma and epsilon chains, while a peripheral stalk is formed by the delta and b chains.

It is found in the cell inner membrane. It catalyses the reaction ATP + H2O + 4 H(+)(in) = ADP + phosphate + 5 H(+)(out). Functionally, produces ATP from ADP in the presence of a proton gradient across the membrane. The catalytic sites are hosted primarily by the beta subunits. The protein is ATP synthase subunit beta of Wolinella succinogenes (strain ATCC 29543 / DSM 1740 / CCUG 13145 / JCM 31913 / LMG 7466 / NCTC 11488 / FDC 602W) (Vibrio succinogenes).